Consider the following 330-residue polypeptide: GMP reductase (330 aa).

Residue C180 is the Thioimidate intermediate of the active site. Residue 209 to 232 (LIADGGIRHNGDIAKSVRFGASMV) participates in NADP(+) binding.

The protein belongs to the IMPDH/GMPR family. GuaC type 2 subfamily.

The enzyme catalyses IMP + NH4(+) + NADP(+) = GMP + NADPH + 2 H(+). Functionally, catalyzes the irreversible NADPH-dependent deamination of GMP to IMP. It functions in the conversion of nucleobase, nucleoside and nucleotide derivatives of G to A nucleotides, and in maintaining the intracellular balance of A and G nucleotides. This chain is GMP reductase, found in Lactobacillus delbrueckii subsp. bulgaricus (strain ATCC BAA-365 / Lb-18).